Consider the following 434-residue polypeptide: Probable proline transporter 2 (434 aa).

11 helical membrane passes run P26 to Y46, S49 to I69, L106 to A126, I149 to L169, I171 to S191, I213 to P233, L251 to W271, L297 to F317, V339 to L359, F362 to M382, and V403 to V423.

It belongs to the amino acid/polyamine transporter 2 family. Amino acid/auxin permease (AAAP) (TC 2.A.18.3) subfamily.

It is found in the cell membrane. Functionally, proline transporter that mediates proline transport across the plasma membrane. The polypeptide is Probable proline transporter 2 (Oryza sativa subsp. japonica (Rice)).